The following is a 314-amino-acid chain: GMP synthase [glutamine-hydrolyzing] subunit B (314 aa).

Residues 2–186 (FDPKKFVEEA…LGIPDEIVER (185 aa)) enclose the GMPS ATP-PPase domain. 29 to 35 (SGGVDST) lines the ATP pocket.

As to quaternary structure, heterodimer composed of a glutamine amidotransferase subunit (A) and a GMP-binding subunit (B).

The catalysed reaction is XMP + L-glutamine + ATP + H2O = GMP + L-glutamate + AMP + diphosphate + 2 H(+). It functions in the pathway purine metabolism; GMP biosynthesis; GMP from XMP (L-Gln route): step 1/1. In terms of biological role, catalyzes the synthesis of GMP from XMP. This chain is GMP synthase [glutamine-hydrolyzing] subunit B (guaAB), found in Methanopyrus kandleri (strain AV19 / DSM 6324 / JCM 9639 / NBRC 100938).